The primary structure comprises 1356 residues: Serine/threonine-protein kinase PSK1 (1356 aa).

The residue at position 10 (Ser10) is a Phosphoserine. The segment at 20 to 115 is disordered; that stretch reads KHAITHKGTS…SVDSTVSSPL (96 aa). Polar residues-rich tracts occupy residues 26–37 and 54–64; these read KGTSSSVASLQT and YDTSLSDVSTP. Low complexity predominate over residues 99–115; that stretch reads LPSTASSSVDSTVSSPL. 5 positions are modified to phosphoserine: Ser192, Ser202, Ser255, Ser286, and Ser327. The PAS 1 domain occupies 450–518; sequence RTFTSTKNSA…VLHKLLSTEG (69 aa). Over residues 592 to 608 the composition is skewed to low complexity; sequence PTLSSSSTLSLPKMASS. Disordered regions lie at residues 592-612 and 627-660; these read PTLS…PTGS and YTKP…PVRS. Residues 738–807 enclose the PAS 2 domain; that stretch reads LKLKIHSLPY…FINDKYPALD (70 aa). Ser926 is subject to Phosphoserine. The interval 948–972 is disordered; sequence DSRAHSQSTLSEQEQVPLENDKDSG. Positions 952 to 961 are enriched in polar residues; that stretch reads HSQSTLSEQE. Phosphoserine is present on residues Ser1018, Ser1023, Ser1035, and Ser1055. Residues 1021-1032 are compositionally biased toward polar residues; sequence TESLADSKSSGK. Positions 1021–1066 are disordered; that stretch reads TESLADSKSSGKGLSPLEEEKLIDENATENGLAGSPKDEDGIIMTN. Phosphothreonine is present on Thr1079. A Protein kinase domain is found at 1096-1354; the sequence is FVSLQKMGEG…IDDINNDKWL (259 aa). Residues 1102 to 1110 and Lys1125 contribute to the ATP site; that span reads MGEGAYGKV. The Proton acceptor role is filled by Asp1230.

It belongs to the protein kinase superfamily. Ser/Thr protein kinase family.

The protein localises to the cytoplasm. It catalyses the reaction L-seryl-[protein] + ATP = O-phospho-L-seryl-[protein] + ADP + H(+). The catalysed reaction is L-threonyl-[protein] + ATP = O-phospho-L-threonyl-[protein] + ADP + H(+). Functionally, serine/threonine-protein kinase involved in the control of sugar metabolism and translation. Phosphorylates UGP1, which is required for normal glycogen and beta-(1,6)-glucan synthesis. This phosphorylation shifts glucose partitioning toward cell wall glucan synthesis at the expense of glycogen synthesis. The polypeptide is Serine/threonine-protein kinase PSK1 (PSK1) (Saccharomyces cerevisiae (strain ATCC 204508 / S288c) (Baker's yeast)).